The following is a 413-amino-acid chain: Glycosyl hydrolase family 109 protein 2 (413 aa).

Residues 26 to 27 (NR), D48, 96 to 99 (WLTH), 116 to 117 (EV), and N145 contribute to the NAD(+) site. Residue Y174 participates in substrate binding. NAD(+) contacts are provided by residues 191–195 (YHNHW) and Y208. Substrate-binding positions include 208-211 (YPTH) and Y290.

Belongs to the Gfo/Idh/MocA family. Glycosyl hydrolase 109 subfamily. The cofactor is NAD(+).

Functionally, glycosidase. In Phocaeicola vulgatus (strain ATCC 8482 / DSM 1447 / JCM 5826 / CCUG 4940 / NBRC 14291 / NCTC 11154) (Bacteroides vulgatus), this protein is Glycosyl hydrolase family 109 protein 2.